Consider the following 60-residue polypeptide: MAKHPVPKKKTSKSKRDMRRSHHALTAPNLTECPQCHGKKLSHHICPNCGYYDGRQVLAV.

Residues 1–23 (MAKHPVPKKKTSKSKRDMRRSHH) show a composition bias toward basic residues. Residues 1 to 34 (MAKHPVPKKKTSKSKRDMRRSHHALTAPNLTECP) form a disordered region. 4 residues coordinate Zn(2+): cysteine 33, cysteine 36, cysteine 46, and cysteine 49. The C4-type zinc finger occupies 33 to 49 (CPQCHGKKLSHHICPNC).

This sequence belongs to the bacterial ribosomal protein bL32 family. Part of the 50S ribosomal subunit. Contacts proteins L17 and L22. Zn(2+) serves as cofactor.

Forms a cluster with L17 and L22, and with L22, a pair of 'tweezers' that hold together all the domains of the 23S rRNA. Interacts with the antibiotic troleandomycin which blocks the peptide exit tunnel. The chain is Large ribosomal subunit protein bL32 (rpmF) from Deinococcus radiodurans (strain ATCC 13939 / DSM 20539 / JCM 16871 / CCUG 27074 / LMG 4051 / NBRC 15346 / NCIMB 9279 / VKM B-1422 / R1).